Reading from the N-terminus, the 307-residue chain is Putative S-adenosyl-L-methionine-dependent methyltransferase MUL_4430 (307 aa).

Residues D128 and 157–158 (DL) contribute to the S-adenosyl-L-methionine site.

This sequence belongs to the UPF0677 family.

In terms of biological role, exhibits S-adenosyl-L-methionine-dependent methyltransferase activity. The polypeptide is Putative S-adenosyl-L-methionine-dependent methyltransferase MUL_4430 (Mycobacterium ulcerans (strain Agy99)).